We begin with the raw amino-acid sequence, 544 residues long: Chaperonin GroEL (544 aa).

ATP is bound by residues 30–33 (TLGP), lysine 51, 87–91 (DGTTT), glycine 415, 481–483 (DAL), and aspartate 497.

This sequence belongs to the chaperonin (HSP60) family. In terms of assembly, forms a cylinder of 14 subunits composed of two heptameric rings stacked back-to-back. Interacts with the co-chaperonin GroES.

Its subcellular location is the cytoplasm. It carries out the reaction ATP + H2O + a folded polypeptide = ADP + phosphate + an unfolded polypeptide.. Together with its co-chaperonin GroES, plays an essential role in assisting protein folding. The GroEL-GroES system forms a nano-cage that allows encapsulation of the non-native substrate proteins and provides a physical environment optimized to promote and accelerate protein folding. In Chlamydia felis (strain Fe/C-56) (Chlamydophila felis), this protein is Chaperonin GroEL.